The primary structure comprises 157 residues: SsrA-binding protein (157 aa).

It belongs to the SmpB family.

The protein resides in the cytoplasm. In terms of biological role, required for rescue of stalled ribosomes mediated by trans-translation. Binds to transfer-messenger RNA (tmRNA), required for stable association of tmRNA with ribosomes. tmRNA and SmpB together mimic tRNA shape, replacing the anticodon stem-loop with SmpB. tmRNA is encoded by the ssrA gene; the 2 termini fold to resemble tRNA(Ala) and it encodes a 'tag peptide', a short internal open reading frame. During trans-translation Ala-aminoacylated tmRNA acts like a tRNA, entering the A-site of stalled ribosomes, displacing the stalled mRNA. The ribosome then switches to translate the ORF on the tmRNA; the nascent peptide is terminated with the 'tag peptide' encoded by the tmRNA and targeted for degradation. The ribosome is freed to recommence translation, which seems to be the essential function of trans-translation. This Syntrophomonas wolfei subsp. wolfei (strain DSM 2245B / Goettingen) protein is SsrA-binding protein.